We begin with the raw amino-acid sequence, 60 residues long: uncharacterized protein (60 aa).

Residues 19–39 form a helical membrane-spanning segment; it reads LSIMCGCSIYFLLLVFILTFY.

The protein localises to the membrane. This is an uncharacterized protein from Saccharomyces cerevisiae (strain ATCC 204508 / S288c) (Baker's yeast).